A 408-amino-acid polypeptide reads, in one-letter code: NADH-quinone oxidoreductase subunit D (408 aa).

Belongs to the complex I 49 kDa subunit family. As to quaternary structure, NDH-1 is composed of 14 different subunits. Subunits NuoB, C, D, E, F, and G constitute the peripheral sector of the complex.

The protein resides in the cell inner membrane. The catalysed reaction is a quinone + NADH + 5 H(+)(in) = a quinol + NAD(+) + 4 H(+)(out). Its function is as follows. NDH-1 shuttles electrons from NADH, via FMN and iron-sulfur (Fe-S) centers, to quinones in the respiratory chain. The immediate electron acceptor for the enzyme in this species is believed to be ubiquinone. Couples the redox reaction to proton translocation (for every two electrons transferred, four hydrogen ions are translocated across the cytoplasmic membrane), and thus conserves the redox energy in a proton gradient. This is NADH-quinone oxidoreductase subunit D from Campylobacter jejuni subsp. jejuni serotype O:2 (strain ATCC 700819 / NCTC 11168).